Reading from the N-terminus, the 259-residue chain is Glucosamine-6-phosphate deaminase (259 aa).

Catalysis depends on Asp-66, which acts as the Proton acceptor; for enolization step. The For ring-opening step role is filled by Asp-135. His-137 acts as the Proton acceptor; for ring-opening step in catalysis. The active-site For ring-opening step is the Glu-142.

This sequence belongs to the glucosamine/galactosamine-6-phosphate isomerase family. NagB subfamily.

It catalyses the reaction alpha-D-glucosamine 6-phosphate + H2O = beta-D-fructose 6-phosphate + NH4(+). It participates in amino-sugar metabolism; N-acetylneuraminate degradation; D-fructose 6-phosphate from N-acetylneuraminate: step 5/5. Its function is as follows. Catalyzes the reversible isomerization-deamination of glucosamine 6-phosphate (GlcN6P) to form fructose 6-phosphate (Fru6P) and ammonium ion. The polypeptide is Glucosamine-6-phosphate deaminase (Pseudarthrobacter chlorophenolicus (strain ATCC 700700 / DSM 12829 / CIP 107037 / JCM 12360 / KCTC 9906 / NCIMB 13794 / A6) (Arthrobacter chlorophenolicus)).